The sequence spans 311 residues: Probable cobalamin biosynthesis protein CobD (311 aa).

A run of 4 helical transmembrane segments spans residues 53-73 (FIFG…AIYG), 76-96 (ILIN…FLIS), 157-177 (DSII…AFIY), and 288-308 (FSID…YVIF).

The protein belongs to the CobD/CbiB family.

It is found in the cell membrane. It functions in the pathway cofactor biosynthesis; adenosylcobalamin biosynthesis. In terms of biological role, converts cobyric acid to cobinamide by the addition of aminopropanol on the F carboxylic group. The polypeptide is Probable cobalamin biosynthesis protein CobD (Methanococcus aeolicus (strain ATCC BAA-1280 / DSM 17508 / OCM 812 / Nankai-3)).